The sequence spans 269 residues: 4-hydroxy-tetrahydrodipicolinate reductase (269 aa).

NAD(+)-binding positions include 13–18 (GASGRM) and D39. R40 contacts NADP(+). NAD(+) contacts are provided by residues 101–103 (GTT) and 125–128 (APNM). H158 (proton donor/acceptor) is an active-site residue. Position 159 (H159) interacts with (S)-2,3,4,5-tetrahydrodipicolinate. K162 serves as the catalytic Proton donor. A (S)-2,3,4,5-tetrahydrodipicolinate-binding site is contributed by 168-169 (GT).

Belongs to the DapB family.

Its subcellular location is the cytoplasm. The catalysed reaction is (S)-2,3,4,5-tetrahydrodipicolinate + NAD(+) + H2O = (2S,4S)-4-hydroxy-2,3,4,5-tetrahydrodipicolinate + NADH + H(+). It catalyses the reaction (S)-2,3,4,5-tetrahydrodipicolinate + NADP(+) + H2O = (2S,4S)-4-hydroxy-2,3,4,5-tetrahydrodipicolinate + NADPH + H(+). It participates in amino-acid biosynthesis; L-lysine biosynthesis via DAP pathway; (S)-tetrahydrodipicolinate from L-aspartate: step 4/4. Catalyzes the conversion of 4-hydroxy-tetrahydrodipicolinate (HTPA) to tetrahydrodipicolinate. The chain is 4-hydroxy-tetrahydrodipicolinate reductase from Bordetella pertussis (strain Tohama I / ATCC BAA-589 / NCTC 13251).